The chain runs to 207 residues: Large ribosomal subunit protein bL25 (207 aa).

It belongs to the bacterial ribosomal protein bL25 family. CTC subfamily. Part of the 50S ribosomal subunit; part of the 5S rRNA/L5/L18/L25 subcomplex. Contacts the 5S rRNA. Binds to the 5S rRNA independently of L5 and L18.

In terms of biological role, this is one of the proteins that binds to the 5S RNA in the ribosome where it forms part of the central protuberance. This chain is Large ribosomal subunit protein bL25, found in Bordetella petrii (strain ATCC BAA-461 / DSM 12804 / CCUG 43448).